The sequence spans 430 residues: 3-phosphoshikimate 1-carboxyvinyltransferase (430 aa).

Residues Lys20, Ser21, and Arg25 each contribute to the 3-phosphoshikimate site. Position 20 (Lys20) interacts with phosphoenolpyruvate. Phosphoenolpyruvate-binding residues include Gly92 and Arg120. 3-phosphoshikimate-binding residues include Ser166, Gln168, Asp312, and Lys339. Phosphoenolpyruvate is bound at residue Gln168. Catalysis depends on Asp312, which acts as the Proton acceptor. Residues Arg343 and Arg387 each contribute to the phosphoenolpyruvate site.

The protein belongs to the EPSP synthase family. As to quaternary structure, monomer.

The protein localises to the cytoplasm. The catalysed reaction is 3-phosphoshikimate + phosphoenolpyruvate = 5-O-(1-carboxyvinyl)-3-phosphoshikimate + phosphate. The protein operates within metabolic intermediate biosynthesis; chorismate biosynthesis; chorismate from D-erythrose 4-phosphate and phosphoenolpyruvate: step 6/7. Catalyzes the transfer of the enolpyruvyl moiety of phosphoenolpyruvate (PEP) to the 5-hydroxyl of shikimate-3-phosphate (S3P) to produce enolpyruvyl shikimate-3-phosphate and inorganic phosphate. The sequence is that of 3-phosphoshikimate 1-carboxyvinyltransferase from Lactococcus lactis subsp. cremoris (strain SK11).